The primary structure comprises 362 residues: Glutaminyl-peptide cyclotransferase (362 aa).

Positions 1 to 35 (MAGSEDKRVVGTLHLLLLQATVLSLTAGNLSLVSA) are cleaved as a signal peptide. Residues Asn-29 and Asn-50 are each glycosylated (N-linked (GlcNAc...) asparagine). Cysteines 140 and 165 form a disulfide. Asp-160 lines the Zn(2+) pocket. Catalysis depends on Glu-202, which acts as the Proton acceptor. Residue Glu-203 participates in Zn(2+) binding. Asp-249 serves as the catalytic Proton acceptor. His-331 contacts Zn(2+).

Belongs to the glutaminyl-peptide cyclotransferase family.

It is found in the secreted. The catalysed reaction is N-terminal L-glutaminyl-[peptide] = N-terminal 5-oxo-L-prolyl-[peptide] + NH4(+). Its function is as follows. Responsible for the biosynthesis of pyroglutamyl peptides. Has a bias against acidic and tryptophan residues adjacent to the N-terminal glutaminyl residue and a lack of importance of chain length after the second residue. The protein is Glutaminyl-peptide cyclotransferase (Qpct) of Mus musculus (Mouse).